Here is a 176-residue protein sequence, read N- to C-terminus: Glutathione-regulated potassium-efflux system ancillary protein KefF (176 aa).

FMN contacts are provided by residues His-8, Ser-14–Asn-17, Met-65–Tyr-68, and Thr-105–Gly-108.

Belongs to the NAD(P)H dehydrogenase (quinone) family. KefF subfamily. In terms of assembly, homodimer. Interacts with KefC. The cofactor is FMN.

The protein localises to the cell inner membrane. It catalyses the reaction a quinone + NADH + H(+) = a quinol + NAD(+). The enzyme catalyses a quinone + NADPH + H(+) = a quinol + NADP(+). Its function is as follows. Regulatory subunit of a potassium efflux system that confers protection against electrophiles. Required for full activity of KefC. Shows redox enzymatic activity, but this enzymatic activity is not required for activation of KefC. This Salmonella dublin (strain CT_02021853) protein is Glutathione-regulated potassium-efflux system ancillary protein KefF.